The primary structure comprises 493 residues: Glutamyl-tRNA(Gln) amidotransferase subunit A (493 aa).

Catalysis depends on charge relay system residues Lys-78 and Ser-158. Ser-182 acts as the Acyl-ester intermediate in catalysis.

This sequence belongs to the amidase family. GatA subfamily. Heterotrimer of A, B and C subunits.

It catalyses the reaction L-glutamyl-tRNA(Gln) + L-glutamine + ATP + H2O = L-glutaminyl-tRNA(Gln) + L-glutamate + ADP + phosphate + H(+). In terms of biological role, allows the formation of correctly charged Gln-tRNA(Gln) through the transamidation of misacylated Glu-tRNA(Gln) in organisms which lack glutaminyl-tRNA synthetase. The reaction takes place in the presence of glutamine and ATP through an activated gamma-phospho-Glu-tRNA(Gln). The sequence is that of Glutamyl-tRNA(Gln) amidotransferase subunit A from Rickettsia bellii (strain RML369-C).